Consider the following 180-residue polypeptide: Shikimate kinase (180 aa).

14 to 19 (GAGKST) contacts ATP. Ser18 provides a ligand contact to Mg(2+). The substrate site is built by Asp36, Arg60, and Gly82. Arg120 is a binding site for ATP. Substrate is bound at residue Arg139.

It belongs to the shikimate kinase family. As to quaternary structure, monomer. It depends on Mg(2+) as a cofactor.

It is found in the cytoplasm. It carries out the reaction shikimate + ATP = 3-phosphoshikimate + ADP + H(+). It functions in the pathway metabolic intermediate biosynthesis; chorismate biosynthesis; chorismate from D-erythrose 4-phosphate and phosphoenolpyruvate: step 5/7. Functionally, catalyzes the specific phosphorylation of the 3-hydroxyl group of shikimic acid using ATP as a cosubstrate. The chain is Shikimate kinase from Chromohalobacter salexigens (strain ATCC BAA-138 / DSM 3043 / CIP 106854 / NCIMB 13768 / 1H11).